Here is a 152-residue protein sequence, read N- to C-terminus: Globin CTT-E/E' (152 aa).

A signal peptide spans 1–15 (MKFIILALCVAAASA). A Globin domain is found at 16–152 (LSGDQIGLVQ…AFFGAVFAKM (137 aa)). The heme b site is built by His73 and His102.

It belongs to the globin family.

This is Globin CTT-E/E' (CTT-E) from Chironomus thummi thummi (Midge).